The chain runs to 506 residues: Histidine ammonia-lyase (506 aa).

Residues 143 to 145 constitute a cross-link (5-imidazolinone (Ala-Gly)); it reads ASG. 2,3-didehydroalanine (Ser) is present on Ser-144.

Belongs to the PAL/histidase family. Contains an active site 4-methylidene-imidazol-5-one (MIO), which is formed autocatalytically by cyclization and dehydration of residues Ala-Ser-Gly.

The protein localises to the cytoplasm. It carries out the reaction L-histidine = trans-urocanate + NH4(+). It participates in amino-acid degradation; L-histidine degradation into L-glutamate; N-formimidoyl-L-glutamate from L-histidine: step 1/3. The chain is Histidine ammonia-lyase from Enterobacter sp. (strain 638).